A 256-amino-acid polypeptide reads, in one-letter code: Small ribosomal subunit protein eS1B (256 aa).

The residue at position 2 (Ala2) is an N-acetylalanine; partial.

The protein belongs to the eukaryotic ribosomal protein eS1 family. In terms of assembly, component of the small ribosomal subunit. Mature ribosomes consist of a small (40S) and a large (60S) subunit. The 40S subunit contains about 33 different proteins and 1 molecule of RNA (18S). The 60S subunit contains about 49 different proteins and 3 molecules of RNA (25S, 5.8S and 5S).

The protein resides in the cytoplasm. The chain is Small ribosomal subunit protein eS1B from Scheffersomyces stipitis (strain ATCC 58785 / CBS 6054 / NBRC 10063 / NRRL Y-11545) (Yeast).